We begin with the raw amino-acid sequence, 192 residues long: Putative 3-methyladenine DNA glycosylase (192 aa).

It belongs to the DNA glycosylase MPG family.

This chain is Putative 3-methyladenine DNA glycosylase, found in Methanoculleus marisnigri (strain ATCC 35101 / DSM 1498 / JR1).